A 372-amino-acid chain; its full sequence is Chaperone protein DnaJ (372 aa).

A J domain is found at 5 to 69 (EFYDRLGVSK…QKRAAYDQYG (65 aa)). The segment at 129–211 (GTEKEVKYHR…CHGTGHEKQA (83 aa)) adopts a CR-type zinc-finger fold. Zn(2+) contacts are provided by cysteine 142, cysteine 145, cysteine 159, cysteine 162, cysteine 185, cysteine 188, cysteine 199, and cysteine 202. CXXCXGXG motif repeat units lie at residues 142–149 (CRTCNGSG), 159–166 (CGRCHGAG), 185–192 (CDVCHGRG), and 199–206 (CTTCHGTG).

It belongs to the DnaJ family. Homodimer. The cofactor is Zn(2+).

The protein resides in the cytoplasm. Its function is as follows. Participates actively in the response to hyperosmotic and heat shock by preventing the aggregation of stress-denatured proteins and by disaggregating proteins, also in an autonomous, DnaK-independent fashion. Unfolded proteins bind initially to DnaJ; upon interaction with the DnaJ-bound protein, DnaK hydrolyzes its bound ATP, resulting in the formation of a stable complex. GrpE releases ADP from DnaK; ATP binding to DnaK triggers the release of the substrate protein, thus completing the reaction cycle. Several rounds of ATP-dependent interactions between DnaJ, DnaK and GrpE are required for fully efficient folding. Also involved, together with DnaK and GrpE, in the DNA replication of plasmids through activation of initiation proteins. This is Chaperone protein DnaJ from Streptococcus pneumoniae (strain ATCC BAA-255 / R6).